We begin with the raw amino-acid sequence, 452 residues long: Cell division protein FtsZ (452 aa).

GTP is bound by residues Gly-24–Asn-28, Gly-111–Gly-113, Glu-142, Arg-146, and Asp-190.

The protein belongs to the FtsZ family. Homodimer. Polymerizes to form a dynamic ring structure in a strictly GTP-dependent manner. Interacts directly with several other division proteins.

It localises to the cytoplasm. Its function is as follows. Essential cell division protein that forms a contractile ring structure (Z ring) at the future cell division site. The regulation of the ring assembly controls the timing and the location of cell division. One of the functions of the FtsZ ring is to recruit other cell division proteins to the septum to produce a new cell wall between the dividing cells. Binds GTP and shows GTPase activity. The chain is Cell division protein FtsZ from Rickettsia felis (strain ATCC VR-1525 / URRWXCal2) (Rickettsia azadi).